Here is a 548-residue protein sequence, read N- to C-terminus: MAMKIPKSGYNRFMKEGAQHFKGTDEAVQRNIEACTELASQIRSAYGPNGMNKMVINHIEKLFVTNDAATILKELEIQHPAARIIIMATEMQEKQIGDNTNTVVILAAALLEHAANLIHMGMTPQEVAAGYEQAAEKALEILPTLVVKEATDMKNIEEVRQYIRSAITSKQYDNEDIIADLVAKACVTTCPANSFNFNVDNIRICKIIGSGVHTSTVMNGMVFKRGAEGEIREARDARIAVYTCPFDLTQTETKGTVLIENADELRNFSKGEEAEVEEQVKAIADNGVKVVVAAGKFGDMYLHFLNKYKIMAVRLTSKFDLRRLCRTVGAQPQARICAPAVNLLGHCDSVAVQEIGDENVVVFDKKSETGKVATIIIRGSSQSRIDDVERAVDDAVNTYKALTKDGKLLAGAGAVEIELAKEIESFGAKAPGLEQYAIKKFAHALETLPKAIAENAGMPTTETLTKLYAEHVAGKKNAGIDIWKRETMDAVVNNIFDLYAGKRLAIKLATDAASTILKVDQIIMSKQATGGPKPRGPKAQDEDDDGMA.

The interval 527–548 (QATGGPKPRGPKAQDEDDDGMA) is disordered.

This sequence belongs to the TCP-1 chaperonin family. In terms of assembly, heterooligomeric complex.

The protein localises to the cytoplasm. In terms of biological role, molecular chaperone; assists the folding of proteins upon ATP hydrolysis. Known to play a role, in vitro, in the folding of actin and tubulin. Required for correct subcellular localization of pgl-1. The polypeptide is T-complex protein 1 subunit theta (cct-8) (Caenorhabditis elegans).